The sequence spans 805 residues: Probable phosphoketolase (805 aa).

Belongs to the XFP family. The cofactor is thiamine diphosphate.

The polypeptide is Probable phosphoketolase (Synechocystis sp. (strain ATCC 27184 / PCC 6803 / Kazusa)).